We begin with the raw amino-acid sequence, 333 residues long: 4-hydroxythreonine-4-phosphate dehydrogenase (333 aa).

2 residues coordinate substrate: histidine 136 and threonine 137. A divalent metal cation is bound by residues histidine 166, histidine 211, and histidine 266. Positions 274, 283, and 292 each coordinate substrate.

It belongs to the PdxA family. As to quaternary structure, homodimer. Zn(2+) serves as cofactor. Requires Mg(2+) as cofactor. It depends on Co(2+) as a cofactor.

It is found in the cytoplasm. The enzyme catalyses 4-(phosphooxy)-L-threonine + NAD(+) = 3-amino-2-oxopropyl phosphate + CO2 + NADH. The protein operates within cofactor biosynthesis; pyridoxine 5'-phosphate biosynthesis; pyridoxine 5'-phosphate from D-erythrose 4-phosphate: step 4/5. Catalyzes the NAD(P)-dependent oxidation of 4-(phosphooxy)-L-threonine (HTP) into 2-amino-3-oxo-4-(phosphooxy)butyric acid which spontaneously decarboxylates to form 3-amino-2-oxopropyl phosphate (AHAP). This is 4-hydroxythreonine-4-phosphate dehydrogenase from Acidithiobacillus ferrooxidans (strain ATCC 23270 / DSM 14882 / CIP 104768 / NCIMB 8455) (Ferrobacillus ferrooxidans (strain ATCC 23270)).